Consider the following 514-residue polypeptide: 3-octaprenyl-4-hydroxybenzoate carboxy-lyase (514 aa).

N177 contributes to the Mn(2+) binding site. Prenylated FMN-binding positions include 180 to 182 (IYR), 194 to 196 (RWL), and 199 to 200 (RG). E243 provides a ligand contact to Mn(2+). The active-site Proton donor is the D314.

It belongs to the UbiD family. In terms of assembly, homohexamer. It depends on prenylated FMN as a cofactor. The cofactor is Mn(2+).

It localises to the cell membrane. The catalysed reaction is a 4-hydroxy-3-(all-trans-polyprenyl)benzoate + H(+) = a 2-(all-trans-polyprenyl)phenol + CO2. The protein operates within cofactor biosynthesis; ubiquinone biosynthesis. Functionally, catalyzes the decarboxylation of 3-octaprenyl-4-hydroxy benzoate to 2-octaprenylphenol, an intermediate step in ubiquinone biosynthesis. The polypeptide is 3-octaprenyl-4-hydroxybenzoate carboxy-lyase (Bordetella bronchiseptica (strain ATCC BAA-588 / NCTC 13252 / RB50) (Alcaligenes bronchisepticus)).